We begin with the raw amino-acid sequence, 269 residues long: S-adenosylmethionine decarboxylase proenzyme (269 aa).

The active-site Schiff-base intermediate with substrate; via pyruvic acid is Ser118. Ser118 is modified (pyruvic acid (Ser); by autocatalysis). The active-site Proton acceptor; for processing activity is His123. Cys146 acts as the Proton donor; for catalytic activity in catalysis.

Belongs to the prokaryotic AdoMetDC family. Type 2 subfamily. As to quaternary structure, heterooctamer of four alpha and four beta chains arranged as a tetramer of alpha/beta heterodimers. It depends on pyruvate as a cofactor. Post-translationally, is synthesized initially as an inactive proenzyme. Formation of the active enzyme involves a self-maturation process in which the active site pyruvoyl group is generated from an internal serine residue via an autocatalytic post-translational modification. Two non-identical subunits are generated from the proenzyme in this reaction, and the pyruvate is formed at the N-terminus of the alpha chain, which is derived from the carboxyl end of the proenzyme. The post-translation cleavage follows an unusual pathway, termed non-hydrolytic serinolysis, in which the side chain hydroxyl group of the serine supplies its oxygen atom to form the C-terminus of the beta chain, while the remainder of the serine residue undergoes an oxidative deamination to produce ammonia and the pyruvoyl group blocking the N-terminus of the alpha chain.

The catalysed reaction is S-adenosyl-L-methionine + H(+) = S-adenosyl 3-(methylsulfanyl)propylamine + CO2. The protein operates within amine and polyamine biosynthesis; S-adenosylmethioninamine biosynthesis; S-adenosylmethioninamine from S-adenosyl-L-methionine: step 1/1. In terms of biological role, catalyzes the decarboxylation of S-adenosylmethionine to S-adenosylmethioninamine (dcAdoMet), the propylamine donor required for the synthesis of the polyamines spermine and spermidine from the diamine putrescine. In Brevibacillus brevis (strain 47 / JCM 6285 / NBRC 100599), this protein is S-adenosylmethionine decarboxylase proenzyme.